Consider the following 492-residue polypeptide: Bifunctional purine biosynthesis protein PurH (492 aa).

Residues 1–144 (MKKVILSVSD…KNFKHVTTIV (144 aa)) form the MGS-like domain.

Belongs to the PurH family.

The enzyme catalyses (6R)-10-formyltetrahydrofolate + 5-amino-1-(5-phospho-beta-D-ribosyl)imidazole-4-carboxamide = 5-formamido-1-(5-phospho-D-ribosyl)imidazole-4-carboxamide + (6S)-5,6,7,8-tetrahydrofolate. It carries out the reaction IMP + H2O = 5-formamido-1-(5-phospho-D-ribosyl)imidazole-4-carboxamide. It functions in the pathway purine metabolism; IMP biosynthesis via de novo pathway; 5-formamido-1-(5-phospho-D-ribosyl)imidazole-4-carboxamide from 5-amino-1-(5-phospho-D-ribosyl)imidazole-4-carboxamide (10-formyl THF route): step 1/1. The protein operates within purine metabolism; IMP biosynthesis via de novo pathway; IMP from 5-formamido-1-(5-phospho-D-ribosyl)imidazole-4-carboxamide: step 1/1. This chain is Bifunctional purine biosynthesis protein PurH, found in Staphylococcus carnosus (strain TM300).